A 137-amino-acid chain; its full sequence is Insulin-like peptide 2 (137 aa).

The N-terminal stretch at 1–26 (MSKPLSFISMVAVILLASSTVKLAQG) is a signal peptide. 3 disulfides stabilise this stretch: Cys29/Cys119, Cys41/Cys132, and Cys118/Cys123. The propeptide at 53-104 (AMPGADSDLDALNPLQFVQEFEEEDNSISEPLRSALFPGSYLGGVLNSLAEV) is connecting peptide.

The protein belongs to the insulin family. As to quaternary structure, heterodimer of a B chain and an A chain linked by two disulfide bonds. As to expression, broadly expressed at a low level in the embryonic mesoderm, beginning at stage 12. Expressed at a high level in the embryonic anterior midgut, with expression diminishing at late stage 16. Expressed at a low level in larval imaginal disks. Expressed at a high level in larval salivary glands and in seven cells of each larval brain hemisphere that may correspond to neurosecretory cells.

The protein resides in the secreted. In terms of biological role, possible ligand of InR/insulin-like receptor. Functionally, plays a role in regulating body size by increasing cell size and cell number of individual organs. Probably mediates its growth effects by acting as a ligand for the insulin receptor and transducing a signal via the Chico/PI3K/Akt(PKB) pathway. The sequence is that of Insulin-like peptide 2 from Drosophila melanogaster (Fruit fly).